Consider the following 1104-residue polypeptide: Reverse gyrase (1104 aa).

The RG N-terminal-type zinc-finger motif lies at 1-39 (MAVNSKYHHSCINCGGLNTDERNERGLPCEVCLPEDSPS). Positions 11, 14, 29, and 32 each coordinate Zn(2+). ADP contacts are provided by F75, D78, Q83, G103, G105, K106, T107, and T108. ATP-binding positions include Q83 and 100–107 (APTGVGKT). The region spanning 87 to 242 (AKRIVQGKSF…FSTIKQGKIY (156 aa)) is the Helicase ATP-binding domain. Positions 203–206 (DDVD) match the DEAD box motif. The interval 223-250 (GIPEEIIRKAFSTIKQGKIYERPKNLKP) is insert region. Positions 300–522 (KLVELLEIFR…EAEANWKELV (223 aa)) constitute a Helicase C-terminal domain. Residues 390 to 460 (RFSLELDKAP…KDEDLELIIP (71 aa)) form a latch region region. The topoisomerase I stretch occupies residues 538–1104 (DTSRSLLIIV…EEIKSLMEEG (567 aa)). One can recognise a Toprim domain in the interval 542-699 (SLLIIVESPT…SLRRIEMHEI (158 aa)). E548 is a binding site for Mg(2+). The RG C-terminal-type zinc-finger motif lies at 618–645 (LKRCRDCGYQFTEDRDECPVCSSKNIDD). C621, C624, C635, and C638 together coordinate Zn(2+). Residue D668 participates in Mg(2+) binding. The Topo IA-type catalytic domain maps to 715–1101 (DFNLVKAQIV…LLYEEIKSLM (387 aa)). Catalysis depends on Y851, which acts as the O-(5'-phospho-DNA)-tyrosine intermediate.

The protein in the N-terminal section; belongs to the DEAD box helicase family. DDVD subfamily. It in the C-terminal section; belongs to the type IA topoisomerase family. Monomer. Zn(2+) is required as a cofactor. Requires Mg(2+) as cofactor.

Its subcellular location is the cytoplasm. It catalyses the reaction ATP + H2O = ADP + phosphate + H(+). Functionally, modifies the topological state of DNA by introducing positive supercoils in an ATP-dependent process. Increases the linking number in steps of +1. Probably recognizes regions with a low GC content which melt and form a ssDNA bubble, allowing the enzyme to bind and cleave the DNA prior to strand passage; the bubble is probably cleaved by 2 reverse gyrase molecules, one on each strand. Positively supercoils DNA with all NTPS, although it strongly prefers ATP. In the presence of non-hydrolyzable ATP analogs it partially relaxes negative supercoils. Has an intrinsic ATPase activity that is stimulated by DNA; ssDNA is most effective. Binds to single-stranded DNA, transiently cleaves and then rejoins the ends, introducing a positive supercoil in the process. The scissile phosphodiester is attacked by the catalytic tyrosine of the enzyme, resulting in the formation of a DNA-(5'-phosphotyrosyl)-enzyme intermediate. The helicase-like domain is a nucleotide-dependent switch that alternates between a physically closed ATP-bound state with a slight preference for dsDNA, and an open ADP-bound state with a high preference for ssDNA. Whole enzyme has a very poor (k-unwind=0.001 sec(-1)) non-processive helicase activity in the 3'-5' direction that works on short substrates, while the isolated helicase domain has a slightly better helicase activity that works in both directions. Probably involved in rewinding DNA strands in regions of the chromosome that have opened up to allow replication, transcription, DNA repair and/or for DNA protection. The chain is Reverse gyrase from Thermotoga maritima (strain ATCC 43589 / DSM 3109 / JCM 10099 / NBRC 100826 / MSB8).